We begin with the raw amino-acid sequence, 56 residues long: Large ribosomal subunit protein bL32 (56 aa).

Residues 1–16 (MAVQKSKKSRSMRGMR) are compositionally biased toward basic residues. Residues 1–22 (MAVQKSKKSRSMRGMRRSHDAL) are disordered.

The protein belongs to the bacterial ribosomal protein bL32 family.

This is Large ribosomal subunit protein bL32 from Aliivibrio salmonicida (strain LFI1238) (Vibrio salmonicida (strain LFI1238)).